The following is a 318-amino-acid chain: Aspartate carbamoyltransferase catalytic subunit (318 aa).

2 residues coordinate carbamoyl phosphate: R67 and T68. K95 is an L-aspartate binding site. 3 residues coordinate carbamoyl phosphate: R117, H145, and Q148. L-aspartate contacts are provided by R178 and R236. 2 residues coordinate carbamoyl phosphate: G277 and P278.

The protein belongs to the aspartate/ornithine carbamoyltransferase superfamily. ATCase family. In terms of assembly, heterododecamer (2C3:3R2) of six catalytic PyrB chains organized as two trimers (C3), and six regulatory PyrI chains organized as three dimers (R2).

The enzyme catalyses carbamoyl phosphate + L-aspartate = N-carbamoyl-L-aspartate + phosphate + H(+). The protein operates within pyrimidine metabolism; UMP biosynthesis via de novo pathway; (S)-dihydroorotate from bicarbonate: step 2/3. Functionally, catalyzes the condensation of carbamoyl phosphate and aspartate to form carbamoyl aspartate and inorganic phosphate, the committed step in the de novo pyrimidine nucleotide biosynthesis pathway. This Roseiflexus sp. (strain RS-1) protein is Aspartate carbamoyltransferase catalytic subunit.